The chain runs to 193 residues: Large ribosomal subunit protein uL18 (193 aa).

It belongs to the universal ribosomal protein uL18 family. Part of the 50S ribosomal subunit. Contacts the 5S and 23S rRNAs.

This is one of the proteins that bind and probably mediate the attachment of the 5S RNA into the large ribosomal subunit, where it forms part of the central protuberance. In Methanobrevibacter smithii (strain ATCC 35061 / DSM 861 / OCM 144 / PS), this protein is Large ribosomal subunit protein uL18.